The sequence spans 336 residues: Holliday junction branch migration complex subunit RuvB (336 aa).

The tract at residues 4–184 is large ATPase domain (RuvB-L); the sequence is ADRLISAGAT…FGIVQRLEFY (181 aa). ATP contacts are provided by residues Ile23, Arg24, Gly65, Lys68, Thr69, Thr70, 131–133, Arg174, Tyr184, and Arg221; that span reads EDY. Thr69 is a Mg(2+) binding site. The tract at residues 185 to 255 is small ATPAse domain (RuvB-S); that stretch reads QVPDLQHIVG…IAAQALDMLN (71 aa). The head domain (RuvB-H) stretch occupies residues 258 to 336; it reads AEGFDYMDRK…HFGITPPEMP (79 aa). 3 residues coordinate DNA: Arg294, Arg313, and Arg318.

The protein belongs to the RuvB family. As to quaternary structure, homohexamer. Forms an RuvA(8)-RuvB(12)-Holliday junction (HJ) complex. HJ DNA is sandwiched between 2 RuvA tetramers; dsDNA enters through RuvA and exits via RuvB. An RuvB hexamer assembles on each DNA strand where it exits the tetramer. Each RuvB hexamer is contacted by two RuvA subunits (via domain III) on 2 adjacent RuvB subunits; this complex drives branch migration. In the full resolvosome a probable DNA-RuvA(4)-RuvB(12)-RuvC(2) complex forms which resolves the HJ.

It localises to the cytoplasm. The catalysed reaction is ATP + H2O = ADP + phosphate + H(+). Functionally, the RuvA-RuvB-RuvC complex processes Holliday junction (HJ) DNA during genetic recombination and DNA repair, while the RuvA-RuvB complex plays an important role in the rescue of blocked DNA replication forks via replication fork reversal (RFR). RuvA specifically binds to HJ cruciform DNA, conferring on it an open structure. The RuvB hexamer acts as an ATP-dependent pump, pulling dsDNA into and through the RuvAB complex. RuvB forms 2 homohexamers on either side of HJ DNA bound by 1 or 2 RuvA tetramers; 4 subunits per hexamer contact DNA at a time. Coordinated motions by a converter formed by DNA-disengaged RuvB subunits stimulates ATP hydrolysis and nucleotide exchange. Immobilization of the converter enables RuvB to convert the ATP-contained energy into a lever motion, pulling 2 nucleotides of DNA out of the RuvA tetramer per ATP hydrolyzed, thus driving DNA branch migration. The RuvB motors rotate together with the DNA substrate, which together with the progressing nucleotide cycle form the mechanistic basis for DNA recombination by continuous HJ branch migration. Branch migration allows RuvC to scan DNA until it finds its consensus sequence, where it cleaves and resolves cruciform DNA. This chain is Holliday junction branch migration complex subunit RuvB, found in Salmonella agona (strain SL483).